We begin with the raw amino-acid sequence, 250 residues long: UPF0246 protein cce_3295 (250 aa).

It belongs to the UPF0246 family.

This Crocosphaera subtropica (strain ATCC 51142 / BH68) (Cyanothece sp. (strain ATCC 51142)) protein is UPF0246 protein cce_3295.